A 543-amino-acid chain; its full sequence is Sensor histidine kinase DcuS (543 aa).

Residues 1-20 (MRHSLPYRMLRKRPMKLSTT) lie on the Cytoplasmic side of the membrane. Residues 21–41 (VILMVSAVLFSVLLVVHLIYF) form a helical membrane-spanning segment. The Periplasmic portion of the chain corresponds to 42 to 181 (SQISDMTRDG…VTQQINDSRW (140 aa)). (R)-malate-binding positions include 107–110 (RYSH), Lys121, 140–142 (GFL), and Arg147. A helical membrane pass occupies residues 182 to 202 (SIIWSVLFGMLVGLIGTCILV). Residues 203–543 (KVLKKILFGL…IPWDGERSNR (341 aa)) lie on the Cytoplasmic side of the membrane. The region spanning 212 to 323 (LEPYEISTLF…IIGAISTFRD (112 aa)) is the PAS domain. The Histidine kinase domain occupies 346–538 (ERSHEFMNKL…QFFVQIPWDG (193 aa)). The residue at position 349 (His349) is a Phosphohistidine; by autocatalysis.

As to quaternary structure, homodimer. In terms of processing, autophosphorylated. The phosphoryl group is rapidly transferred to DcuR.

The protein resides in the cell inner membrane. The enzyme catalyses ATP + protein L-histidine = ADP + protein N-phospho-L-histidine.. Member of the two-component regulatory system DcuR/DcuS. Involved in the C4-dicarboxylate-stimulated regulation of the genes encoding the anaerobic fumarate respiratory system (frdABCD; nuoAN; dcuB; sdhCDAB; etc.). Weakly regulates the aerobic C4-dicarboxylate transporter dctA. Activates DcuR by phosphorylation. The protein is Sensor histidine kinase DcuS (dcuS) of Escherichia coli O157:H7.